The primary structure comprises 81 residues: MSKGQSLQDPYLNILRKERVPVSIFLVNGIKLQGQIESFDQFVILLKNTVSQMVYKHAISTVVPSRTIRIPSPDQPEDDAE.

In terms of domain architecture, Sm spans 9–68; it reads DPYLNILRKERVPVSIFLVNGIKLQGQIESFDQFVILLKNTVSQMVYKHAISTVVPSRTI.

This sequence belongs to the Hfq family. As to quaternary structure, homohexamer.

Functionally, RNA chaperone that binds small regulatory RNA (sRNAs) and mRNAs to facilitate mRNA translational regulation in response to envelope stress, environmental stress and changes in metabolite concentrations. Also binds with high specificity to tRNAs. This is RNA-binding protein Hfq from Marinomonas sp. (strain MWYL1).